The sequence spans 70 residues: Large ribosomal subunit protein bL31 (70 aa).

Residues C16, C18, C37, and C40 each coordinate Zn(2+).

This sequence belongs to the bacterial ribosomal protein bL31 family. Type A subfamily. As to quaternary structure, part of the 50S ribosomal subunit. Zn(2+) serves as cofactor.

In terms of biological role, binds the 23S rRNA. This chain is Large ribosomal subunit protein bL31, found in Histophilus somni (strain 2336) (Haemophilus somnus).